The chain runs to 565 residues: NAD-dependent malic enzyme (565 aa).

Y104 acts as the Proton donor in catalysis. R157 provides a ligand contact to NAD(+). K175 (proton acceptor) is an active-site residue. E246, D247, and D270 together coordinate a divalent metal cation. Residues D270 and N418 each coordinate NAD(+).

Belongs to the malic enzymes family. As to quaternary structure, homotetramer. The cofactor is Mg(2+). Mn(2+) serves as cofactor.

The enzyme catalyses (S)-malate + NAD(+) = pyruvate + CO2 + NADH. It carries out the reaction oxaloacetate + H(+) = pyruvate + CO2. The protein is NAD-dependent malic enzyme of Enterobacter sp. (strain 638).